Consider the following 398-residue polypeptide: S-adenosylmethionine synthase (398 aa).

136 to 141 lines the ATP pocket; the sequence is GTGSSD.

Belongs to the AdoMet synthase 2 family. Mg(2+) is required as a cofactor.

It carries out the reaction L-methionine + ATP + H2O = S-adenosyl-L-methionine + phosphate + diphosphate. It functions in the pathway amino-acid biosynthesis; S-adenosyl-L-methionine biosynthesis; S-adenosyl-L-methionine from L-methionine: step 1/1. Functionally, catalyzes the formation of S-adenosylmethionine from methionine and ATP. This is S-adenosylmethionine synthase from Methanosarcina acetivorans (strain ATCC 35395 / DSM 2834 / JCM 12185 / C2A).